A 242-amino-acid polypeptide reads, in one-letter code: 1-(5-phosphoribosyl)-5-[(5-phosphoribosylamino)methylideneamino] imidazole-4-carboxamide isomerase (242 aa).

Residue Asp8 is the Proton acceptor of the active site. Asp129 functions as the Proton donor in the catalytic mechanism.

Belongs to the HisA/HisF family.

It localises to the cytoplasm. It carries out the reaction 1-(5-phospho-beta-D-ribosyl)-5-[(5-phospho-beta-D-ribosylamino)methylideneamino]imidazole-4-carboxamide = 5-[(5-phospho-1-deoxy-D-ribulos-1-ylimino)methylamino]-1-(5-phospho-beta-D-ribosyl)imidazole-4-carboxamide. Its pathway is amino-acid biosynthesis; L-histidine biosynthesis; L-histidine from 5-phospho-alpha-D-ribose 1-diphosphate: step 4/9. This is 1-(5-phosphoribosyl)-5-[(5-phosphoribosylamino)methylideneamino] imidazole-4-carboxamide isomerase from Erythrobacter litoralis (strain HTCC2594).